The following is a 392-amino-acid chain: Phosphoglycerate kinase (392 aa).

Substrate is bound by residues 21–23, R36, 59–62, R113, and R146; these read DLN and HLGR. ATP contacts are provided by residues K197, E319, and 345–348; that span reads GGDT.

This sequence belongs to the phosphoglycerate kinase family. As to quaternary structure, monomer.

Its subcellular location is the cytoplasm. It carries out the reaction (2R)-3-phosphoglycerate + ATP = (2R)-3-phospho-glyceroyl phosphate + ADP. It participates in carbohydrate degradation; glycolysis; pyruvate from D-glyceraldehyde 3-phosphate: step 2/5. In Nitrosococcus oceani (strain ATCC 19707 / BCRC 17464 / JCM 30415 / NCIMB 11848 / C-107), this protein is Phosphoglycerate kinase.